Here is a 479-residue protein sequence, read N- to C-terminus: Carbohydrate sulfotransferase 3 (479 aa).

The Cytoplasmic portion of the chain corresponds to 1-20 (MEKGLTLPQDCRDFVHSLKM). A helical; Signal-anchor for type II membrane protein transmembrane segment spans residues 21–38 (RSKYALFLVFVVIVFVFI). Residues 39–479 (EKENKIISRV…LEERGTFWVT (441 aa)) lie on the Lumenal side of the membrane. N-linked (GlcNAc...) asparagine glycosylation is found at Asn63, Asn74, and Asn96. The tract at residues 108 to 128 (EAAGEEEEEQRKEEEPPRPAV) is disordered. 141–147 (TRTGSSF) contacts 3'-phosphoadenylyl sulfate. N-linked (GlcNAc...) asparagine glycosylation occurs at Asn256. 301 to 309 (RDPRAVLAS) serves as a coordination point for 3'-phosphoadenylyl sulfate. Asn420 and Asn464 each carry an N-linked (GlcNAc...) asparagine glycan.

The protein belongs to the sulfotransferase 1 family. Gal/GlcNAc/GalNAc subfamily. In terms of processing, N-glycosylated. Widely expressed in adult tissues. Expressed in heart, placenta, skeletal muscle and pancreas. Also expressed in various immune tissues such as spleen, lymph node, thymus and appendix.

It is found in the golgi apparatus membrane. It catalyses the reaction chondroitin beta-D-glucuronate + n 3'-phosphoadenylyl sulfate = chondroitin 6'-sulfate + n adenosine 3',5'-bisphosphate + n H(+). The catalysed reaction is 3'-phosphoadenylyl sulfate + keratan = adenosine 3',5'-bisphosphate + keratan 6'-sulfate.. Its function is as follows. Sulfotransferase that utilizes 3'-phospho-5'-adenylyl sulfate (PAPS) as sulfonate donor to catalyze the transfer of sulfate to position 6 of the N-acetylgalactosamine (GalNAc) residue of chondroitin. Chondroitin sulfate constitutes the predominant proteoglycan present in cartilage and is distributed on the surfaces of many cells and extracellular matrices. Catalyzes with a lower efficiency the sulfation of Gal residues of keratan sulfate, another glycosaminoglycan. Can also catalyze the sulfation of the Gal residues in sialyl N-acetyllactosamine (sialyl LacNAc) oligosaccharides. May play a role in the maintenance of naive T-lymphocytes in the spleen. The sequence is that of Carbohydrate sulfotransferase 3 (CHST3) from Homo sapiens (Human).